The chain runs to 647 residues: XK-related protein 4 (647 aa).

A helical membrane pass occupies residues 142 to 162; that stretch reads WFGLTLFFVVLGSLSVQVFSF. Residues 193 to 238 are disordered; sequence VSSGSAAGEGEARPSTPQRQASNASKSNIAATNSGSNSNGATRTSG. S197 bears the Phosphoserine mark. The span at 207–236 shows a compositional bias: polar residues; the sequence is STPQRQASNASKSNIAATNSGSNSNGATRT. 7 consecutive transmembrane segments (helical) span residues 245-265, 328-348, 362-382, 393-415, 425-445, 454-474, and 484-504; these read CSFC…GQVW, LQAL…WALA, KPIS…TIAA, VFQL…WIVH, WEEI…WFNV, LFIY…LWYL, and FAIP…VFML.

It belongs to the XK family. Homodimer; homodimerization takes place upon caspase cleavage. Interacts with the processed C-terminus of XRCC4 (protein XRCC4, C-terminus); interaction promotes the phospholipid scramblase activity. In terms of processing, undergoes proteolytic processing by caspase-3 (CASP3), caspase-6 (CASP6) and caspase-7 (CASP7) to generate the XK-related protein 4, processed form, leading to its activation.

It is found in the cell membrane. The enzyme catalyses a 1,2-diacyl-sn-glycero-3-phospho-L-serine(in) = a 1,2-diacyl-sn-glycero-3-phospho-L-serine(out). Phospholipid scramblase activity is activated upon caspase cleavage to generate the XK-related protein 4, processed form. Does not act prior the onset of apoptosis. With respect to regulation, homodimerizes upon caspase cleavage. Phospholipid scramblase activity is activated following interaction with the processed C-terminus of XRCC4 (protein XRCC4, C-terminus). Its function is as follows. Phospholipid scramblase that promotes phosphatidylserine exposure on apoptotic cell surface. Phosphatidylserine is a specific marker only present at the surface of apoptotic cells and acts as a specific signal for engulfment. This chain is XK-related protein 4, found in Rattus norvegicus (Rat).